The sequence spans 373 residues: MKIRILCMFICTLLLSGCWDSENIEELSLVIGIGLDKPDDENLELTQQILVPKIISAKEGSSSDPTQLSITKGKTVHQMMRTSALKHKPTFSQHLRLILLSKSVIADQIGMDAIINQFVRDNGTRRSSYVFITNGRTKDIFNMNDEGEPASNVIYDLTENNKVTIRTMEPVTLGEISEHLTSDDSFLIPHVGKENGKLAINGASIIKNKLWHRDLTPIEVQNISLFSGTVEGGVIDLKRDGHLFSYEVYSSNRKIKTAYKDGKFKFTVTRNIEGRLSEDWNPNEDSFKDSYIKSIEKTVEKRVHETVTSFITEKLQKEIKADVTGLGNEVRIHYPQKWKKISRKWDDDYFSNAEIDYRVNVIVRDFGTKGANK.

Positions 1-17 are cleaved as a signal peptide; sequence MKIRILCMFICTLLLSG. The N-palmitoyl cysteine moiety is linked to residue Cys-18. Cys-18 is lipidated: S-diacylglycerol cysteine.

This sequence belongs to the GerABKC lipoprotein family.

The protein resides in the cell membrane. Forms a complex at the inner spore membrane which acts as a receptor for L-alanine, thus is involved in the stimulation of germination in response to alanine. Can stimulate germination in the absence of GerD and GerK gene products (fructose and glucose receptors, respectively), but the response is improved in their presence. This chain is Spore germination protein A3 (gerAC), found in Bacillus subtilis (strain 168).